A 196-amino-acid chain; its full sequence is Large ribosomal subunit protein bL9 (196 aa).

It belongs to the bacterial ribosomal protein bL9 family.

Its function is as follows. Binds to the 23S rRNA. In Gluconobacter oxydans (strain 621H) (Gluconobacter suboxydans), this protein is Large ribosomal subunit protein bL9.